The chain runs to 290 residues: Isopentenyl-diphosphate Delta-isomerase II (290 aa).

Positions methionine 108–leucine 260 constitute a Nudix hydrolase domain. Catalysis depends on residues cysteine 145 and glutamate 207.

This sequence belongs to the IPP isomerase type 1 family.

It carries out the reaction isopentenyl diphosphate = dimethylallyl diphosphate. The protein operates within isoprenoid biosynthesis; dimethylallyl diphosphate biosynthesis; dimethylallyl diphosphate from isopentenyl diphosphate: step 1/1. It participates in porphyrin-containing compound metabolism; chlorophyll biosynthesis. In terms of biological role, catalyzes the 1,3-allylic rearrangement of the homoallylic substrate isopentenyl (IPP) to its highly electrophilic allylic isomer, dimethylallyl diphosphate (DMAPP). In Clarkia xantiana (Gunsight clarkia), this protein is Isopentenyl-diphosphate Delta-isomerase II (IPI2).